Here is a 436-residue protein sequence, read N- to C-terminus: Glutamyl-tRNA reductase (436 aa).

Residues 49-52 (TCNR), Ser118, 123-125 (EPQ), and Gln129 each bind substrate. The active-site Nucleophile is the Cys50. Residue 203–208 (GAGETI) participates in NADP(+) binding.

The protein belongs to the glutamyl-tRNA reductase family. As to quaternary structure, homodimer.

The enzyme catalyses (S)-4-amino-5-oxopentanoate + tRNA(Glu) + NADP(+) = L-glutamyl-tRNA(Glu) + NADPH + H(+). Its pathway is porphyrin-containing compound metabolism; protoporphyrin-IX biosynthesis; 5-aminolevulinate from L-glutamyl-tRNA(Glu): step 1/2. In terms of biological role, catalyzes the NADPH-dependent reduction of glutamyl-tRNA(Glu) to glutamate 1-semialdehyde (GSA). This chain is Glutamyl-tRNA reductase, found in Actinobacillus pleuropneumoniae serotype 7 (strain AP76).